The chain runs to 281 residues: Nucleotide-binding protein Tpet_1006 (281 aa).

9–16 (GLSGAGKT) serves as a coordination point for ATP. A GTP-binding site is contributed by 58 to 61 (DVRS).

The protein belongs to the RapZ-like family.

In terms of biological role, displays ATPase and GTPase activities. In Thermotoga petrophila (strain ATCC BAA-488 / DSM 13995 / JCM 10881 / RKU-1), this protein is Nucleotide-binding protein Tpet_1006.